The following is a 426-amino-acid chain: Dihydroorotase (426 aa).

Residues His62 and His64 each contribute to the Zn(2+) site. Residues 64–66 (HLR) and Asn96 contribute to the substrate site. Residues Asp154, His181, His234, and Asp307 each contribute to the Zn(2+) site. The active site involves Asp307. His311 contacts substrate.

This sequence belongs to the metallo-dependent hydrolases superfamily. DHOase family. Class I DHOase subfamily. Zn(2+) serves as cofactor.

The catalysed reaction is (S)-dihydroorotate + H2O = N-carbamoyl-L-aspartate + H(+). It participates in pyrimidine metabolism; UMP biosynthesis via de novo pathway; (S)-dihydroorotate from bicarbonate: step 3/3. Catalyzes the reversible cyclization of carbamoyl aspartate to dihydroorotate. The chain is Dihydroorotase from Syntrophus aciditrophicus (strain SB).